The sequence spans 192 residues: A-type ATP synthase subunit E (192 aa).

It belongs to the V-ATPase E subunit family. In terms of assembly, has multiple subunits with at least A(3), B(3), C, D, E, F, H, I and proteolipid K(x).

Its subcellular location is the cell membrane. Its function is as follows. Component of the A-type ATP synthase that produces ATP from ADP in the presence of a proton gradient across the membrane. This chain is A-type ATP synthase subunit E, found in Halorubrum lacusprofundi (strain ATCC 49239 / DSM 5036 / JCM 8891 / ACAM 34).